The primary structure comprises 201 residues: Glycerol-3-phosphate acyltransferase (201 aa).

Transmembrane regions (helical) follow at residues 5–25, 55–75, 88–108, 118–138, and 164–184; these read LLGALLVAAGYLAGSIPFGVV, KMGVLVLVLDAAKAIVPILVA, WVTAVAVAAFVGHLFPVWLGF, LGIFAVLAPWAALAGLVGYAV, and TYGPRHPISWAGLAIALLIFL.

This sequence belongs to the PlsY family. As to quaternary structure, probably interacts with PlsX.

It localises to the cell inner membrane. The enzyme catalyses an acyl phosphate + sn-glycerol 3-phosphate = a 1-acyl-sn-glycero-3-phosphate + phosphate. It participates in lipid metabolism; phospholipid metabolism. Its function is as follows. Catalyzes the transfer of an acyl group from acyl-phosphate (acyl-PO(4)) to glycerol-3-phosphate (G3P) to form lysophosphatidic acid (LPA). This enzyme utilizes acyl-phosphate as fatty acyl donor, but not acyl-CoA or acyl-ACP. In Anaeromyxobacter sp. (strain K), this protein is Glycerol-3-phosphate acyltransferase.